Here is a 595-residue protein sequence, read N- to C-terminus: Leiomodin-1 (595 aa).

Disordered stretches follow at residues 1 to 322 and 467 to 568; these read MSKV…KVKN and DKQR…QEKN. At S12 the chain carries Phosphoserine. Positions 27–40 are enriched in acidic residues; sequence EEMEELEKELDVVD. 8 stretches are compositionally biased toward basic and acidic residues: residues 72 to 105, 117 to 127, 134 to 193, 201 to 224, 232 to 251, 259 to 289, 467 to 476, and 484 to 493; these read CEKE…EDKG, QDSDVGKEPKK, FSRD…EKTG, SRDK…KLTA, RQED…KPEV, RDSR…REKQ, DKQRQKRLQE, and SGEKKDRLEV. At S85 the chain carries Phosphoserine. S135 bears the Phosphoserine mark. A run of 8 repeats spans residues 165 to 180, 181 to 196, 197 to 212, 213 to 227, 228 to 243, 244 to 257, 258 to 273, and 274 to 288. Positions 165–288 are 8 X approximate tandem repeats; that stretch reads AAVDRKEAGK…VREEGKTREK (124 aa). 2 stretches are compositionally biased toward pro residues: residues 503-513 and 527-538; these read SPKPSPQPSPK and AAPPPPPPPLAP. Residues 503–522 are 5 X 4 AA approximate tandem repeats; it reads SPKPSPQPSPKSAPKNSPKK. Residue S550 is modified to Phosphoserine. The region spanning 569 to 588 is the WH2 domain; the sequence is SRDQLLAAIRSSNLKQLKKV.

Detected in smooth muscle, in stomach and uterus, blood vessel wall, and in slow fibers in extraocular muscle, urinary bladder and sternothyroid muscle (at protein level).

It is found in the cytoplasm. It localises to the myofibril. Its subcellular location is the sarcomere. The protein resides in the cytoskeleton. Functionally, required for proper contractility of visceral smooth muscle cells. Mediates nucleation of actin filaments. This chain is Leiomodin-1, found in Rattus norvegicus (Rat).